The primary structure comprises 181 residues: RNA pyrophosphohydrolase (181 aa).

Positions 6–150 (GYRPNVGIII…KCEVYRCALK (145 aa)) constitute a Nudix hydrolase domain. The Nudix box motif lies at 38–59 (GGIKEGETPEQAMYRELYEEVG).

The protein belongs to the Nudix hydrolase family. RppH subfamily. A divalent metal cation serves as cofactor.

In terms of biological role, accelerates the degradation of transcripts by removing pyrophosphate from the 5'-end of triphosphorylated RNA, leading to a more labile monophosphorylated state that can stimulate subsequent ribonuclease cleavage. The sequence is that of RNA pyrophosphohydrolase from Psychromonas ingrahamii (strain DSM 17664 / CCUG 51855 / 37).